Reading from the N-terminus, the 424-residue chain is Probable ribonuclease FAU-1 (424 aa).

This sequence belongs to the FAU-1 family.

Its function is as follows. Probable RNase involved in rRNA stability through maturation and/or degradation of precursor rRNAs. Binds to RNA in loop regions with AU-rich sequences. In Saccharolobus solfataricus (strain ATCC 35092 / DSM 1617 / JCM 11322 / P2) (Sulfolobus solfataricus), this protein is Probable ribonuclease FAU-1.